The sequence spans 118 residues: Large ribosomal subunit protein uL24 (118 aa).

The disordered stretch occupies residues 1-24 (MSEQPHKQRTRTKRASLHEKQDQV).

Belongs to the universal ribosomal protein uL24 family. In terms of assembly, part of the 50S ribosomal subunit.

In terms of biological role, one of two assembly initiator proteins, it binds directly to the 5'-end of the 23S rRNA, where it nucleates assembly of the 50S subunit. Functionally, located at the polypeptide exit tunnel on the outside of the subunit. This chain is Large ribosomal subunit protein uL24, found in Halobacterium salinarum (strain ATCC 700922 / JCM 11081 / NRC-1) (Halobacterium halobium).